We begin with the raw amino-acid sequence, 261 residues long: Cytochrome c oxidase subunit 3 (261 aa).

Over methionine 1–proline 15 the chain is Mitochondrial matrix. Residues tryptophan 16–tryptophan 34 form a helical membrane-spanning segment. At phenylalanine 35–threonine 40 the chain is on the mitochondrial intermembrane side. The chain crosses the membrane as a helical span at residues isoleucine 41–threonine 66. Topologically, residues phenylalanine 67–threonine 72 are mitochondrial matrix. The helical transmembrane segment at proline 73–serine 105 threads the bilayer. The Mitochondrial intermembrane segment spans residues leucine 106–glutamate 128. A helical transmembrane segment spans residues valine 129–methionine 152. At glutamate 153–asparagine 155 the chain is on the mitochondrial matrix side. The chain crosses the membrane as a helical span at residues arginine 156–glutamate 183. The Mitochondrial intermembrane portion of the chain corresponds to alanine 184 to aspartate 190. A helical transmembrane segment spans residues glycine 191–leucine 223. At lysine 224–histidine 232 the chain is on the mitochondrial matrix side. Residues phenylalanine 233–isoleucine 256 form a helical membrane-spanning segment. Residues tyrosine 257–serine 261 are Mitochondrial intermembrane-facing.

This sequence belongs to the cytochrome c oxidase subunit 3 family. As to quaternary structure, component of the cytochrome c oxidase (complex IV, CIV), a multisubunit enzyme composed of 14 subunits. The complex is composed of a catalytic core of 3 subunits MT-CO1, MT-CO2 and MT-CO3, encoded in the mitochondrial DNA, and 11 supernumerary subunits COX4I, COX5A, COX5B, COX6A, COX6B, COX6C, COX7A, COX7B, COX7C, COX8 and NDUFA4, which are encoded in the nuclear genome. The complex exists as a monomer or a dimer and forms supercomplexes (SCs) in the inner mitochondrial membrane with NADH-ubiquinone oxidoreductase (complex I, CI) and ubiquinol-cytochrome c oxidoreductase (cytochrome b-c1 complex, complex III, CIII), resulting in different assemblies (supercomplex SCI(1)III(2)IV(1) and megacomplex MCI(2)III(2)IV(2)).

It localises to the mitochondrion inner membrane. The catalysed reaction is 4 Fe(II)-[cytochrome c] + O2 + 8 H(+)(in) = 4 Fe(III)-[cytochrome c] + 2 H2O + 4 H(+)(out). Its function is as follows. Component of the cytochrome c oxidase, the last enzyme in the mitochondrial electron transport chain which drives oxidative phosphorylation. The respiratory chain contains 3 multisubunit complexes succinate dehydrogenase (complex II, CII), ubiquinol-cytochrome c oxidoreductase (cytochrome b-c1 complex, complex III, CIII) and cytochrome c oxidase (complex IV, CIV), that cooperate to transfer electrons derived from NADH and succinate to molecular oxygen, creating an electrochemical gradient over the inner membrane that drives transmembrane transport and the ATP synthase. Cytochrome c oxidase is the component of the respiratory chain that catalyzes the reduction of oxygen to water. Electrons originating from reduced cytochrome c in the intermembrane space (IMS) are transferred via the dinuclear copper A center (CU(A)) of subunit 2 and heme A of subunit 1 to the active site in subunit 1, a binuclear center (BNC) formed by heme A3 and copper B (CU(B)). The BNC reduces molecular oxygen to 2 water molecules using 4 electrons from cytochrome c in the IMS and 4 protons from the mitochondrial matrix. This chain is Cytochrome c oxidase subunit 3 (MT-CO3), found in Raphicerus melanotis (Cape grysbok).